Consider the following 201-residue polypeptide: Large ribosomal subunit protein uL4 (201 aa).

Residues 45–66 (AQKSRAEVVGSNKKPWRQKGTG) form a disordered region.

This sequence belongs to the universal ribosomal protein uL4 family. In terms of assembly, part of the 50S ribosomal subunit.

Functionally, one of the primary rRNA binding proteins, this protein initially binds near the 5'-end of the 23S rRNA. It is important during the early stages of 50S assembly. It makes multiple contacts with different domains of the 23S rRNA in the assembled 50S subunit and ribosome. In terms of biological role, forms part of the polypeptide exit tunnel. The chain is Large ribosomal subunit protein uL4 from Baumannia cicadellinicola subsp. Homalodisca coagulata.